The chain runs to 127 residues: Secreted RxLR effector protein 7 (127 aa).

An N-terminal signal peptide occupies residues 1–21 (MRSAYYVLTALLVVASSQVAA). A RxLR-dEER motif is present at residues 48-65 (RFLRESRDVHGNVANEER).

The protein belongs to the RxLR effector family.

Its subcellular location is the secreted. It is found in the host nucleus. It localises to the host cytoplasm. Its function is as follows. Secreted effector that completely suppresses the host cell death induced by cell death-inducing proteins. The chain is Secreted RxLR effector protein 7 from Plasmopara viticola (Downy mildew of grapevine).